The chain runs to 110 residues: UPF0060 membrane protein MMAR_2961 (110 aa).

The next 4 helical transmembrane spans lie at 6-26 (ILLFIVAAVAEIGGAWLVWQG), 32-52 (GLAWIGAGVIALGLYGFVATL), 61-81 (ILAAYGGIFVAGSLLWGMAFD), and 90-110 (IVGALVCLAGVGVIMYAPRAH).

The protein belongs to the UPF0060 family.

The protein localises to the cell membrane. The sequence is that of UPF0060 membrane protein MMAR_2961 from Mycobacterium marinum (strain ATCC BAA-535 / M).